The chain runs to 189 residues: Transcription factor FapR (189 aa).

It belongs to the FapR family.

Transcriptional factor involved in regulation of membrane lipid biosynthesis by repressing genes involved in fatty acid and phospholipid metabolism. The polypeptide is Transcription factor FapR (Listeria welshimeri serovar 6b (strain ATCC 35897 / DSM 20650 / CCUG 15529 / CIP 8149 / NCTC 11857 / SLCC 5334 / V8)).